The sequence spans 632 residues: Tetratricopeptide repeat protein 39B (632 aa).

TPR repeat units follow at residues 343-376 (SLVL…QEEW), 535-568 (CLVK…EKLL), and 576-609 (PFTL…YKDY).

This sequence belongs to the TTC39 family.

Functionally, regulates high density lipoprotein (HDL) cholesterol metabolism by promoting the ubiquitination and degradation of the oxysterols receptors LXR (NR1H2 and NR1H3). The chain is Tetratricopeptide repeat protein 39B (TTC39B) from Macaca fascicularis (Crab-eating macaque).